Reading from the N-terminus, the 508-residue chain is Steroid 17-alpha-hydroxylase/17,20 lyase (508 aa).

A substrate-binding site is contributed by Asn202. Cys442 is a heme binding site.

The protein belongs to the cytochrome P450 family. The cofactor is heme.

The protein resides in the endoplasmic reticulum membrane. The protein localises to the microsome membrane. It catalyses the reaction a C21-steroid + reduced [NADPH--hemoprotein reductase] + O2 = a 17alpha-hydroxy-C21-steroid + oxidized [NADPH--hemoprotein reductase] + H2O + H(+). The catalysed reaction is progesterone + reduced [NADPH--hemoprotein reductase] + O2 = 17alpha-hydroxyprogesterone + oxidized [NADPH--hemoprotein reductase] + H2O + H(+). The enzyme catalyses pregnenolone + reduced [NADPH--hemoprotein reductase] + O2 = 17alpha-hydroxypregnenolone + oxidized [NADPH--hemoprotein reductase] + H2O + H(+). It carries out the reaction 17alpha-hydroxyprogesterone + reduced [NADPH--hemoprotein reductase] + O2 = androst-4-ene-3,17-dione + acetate + oxidized [NADPH--hemoprotein reductase] + H2O + 2 H(+). It catalyses the reaction 17alpha-hydroxyprogesterone + reduced [NADPH--hemoprotein reductase] + O2 = 16alpha,17alpha-dihydroxyprogesterone + oxidized [NADPH--hemoprotein reductase] + H2O + H(+). The catalysed reaction is 16alpha,17alpha-dihydroxyprogesterone + reduced [NADPH--hemoprotein reductase] + O2 = 6beta,16alpha,17alpha-trihydroxyprogesterone + oxidized [NADPH--hemoprotein reductase] + H2O + H(+). The enzyme catalyses 17alpha-hydroxypregnenolone + reduced [NADPH--hemoprotein reductase] + O2 = 3beta-hydroxyandrost-5-en-17-one + acetate + oxidized [NADPH--hemoprotein reductase] + H2O + 2 H(+). It carries out the reaction 16alpha,17alpha-dihydroxypregnenolone + reduced [NADPH--hemoprotein reductase] + O2 = 3beta,16alpha-dihydroxy-androst-5-en-17-one + acetate + oxidized [NADPH--hemoprotein reductase] + H2O + 2 H(+). It catalyses the reaction 3beta-hydroxyandrost-5-en-17-one + reduced [NADPH--hemoprotein reductase] + O2 = 3beta,16alpha-dihydroxy-androst-5-en-17-one + oxidized [NADPH--hemoprotein reductase] + H2O + H(+). The catalysed reaction is androst-4-ene-3,17-dione + reduced [NADPH--hemoprotein reductase] + O2 = 16alpha-hydroxyandrost-4-ene-3,17-dione + oxidized [NADPH--hemoprotein reductase] + H2O + H(+). It functions in the pathway steroid hormone biosynthesis. It participates in steroid biosynthesis; glucocorticoid biosynthesis. Its activity is regulated as follows. Regulated predominantly by intracellular cAMP levels. The 17,20-lyase activity is stimulated by cytochrome b5, which acts as an allosteric effector increasing the Vmax of the lyase activity. Its function is as follows. A cytochrome P450 monooxygenase involved in corticoid and androgen biosynthesis. Catalyzes 17-alpha hydroxylation of C21 steroids, which is common for both pathways. A second oxidative step, required only for androgen synthesis, involves an acyl-carbon cleavage. The 17-alpha hydroxy intermediates, as part of adrenal glucocorticoids biosynthesis pathway, are precursors of cortisol. Hydroxylates steroid hormones, pregnenolone and progesterone to form 17-alpha hydroxy metabolites, followed by the cleavage of the C17-C20 bond to form C19 steroids, dehydroepiandrosterone (DHEA) and androstenedione. Has 16-alpha hydroxylase activity. Catalyzes 16-alpha hydroxylation of 17-alpha hydroxy pregnenolone, followed by the cleavage of the C17-C20 bond to form 16-alpha-hydroxy DHEA. Also 16-alpha hydroxylates androgens, relevant for estriol synthesis. Mechanistically, uses molecular oxygen inserting one oxygen atom into a substrate, and reducing the second into a water molecule, with two electrons provided by NADPH via cytochrome P450 reductase (CPR; NADPH-ferrihemoprotein reductase). The sequence is that of Steroid 17-alpha-hydroxylase/17,20 lyase (CYP17A1) from Pan troglodytes (Chimpanzee).